The sequence spans 525 residues: Vesicular inhibitory amino acid transporter (525 aa).

The Cytoplasmic segment spans residues 1-132 (MATLLRSKLS…WNVTNAIQGM (132 aa)). Positions 83–107 (IHYQRGSGAPLPPSGSKDQVGGGGE) are disordered. A helical transmembrane segment spans residues 133 to 153 (FVLGLPYAILHGGYLGLFLII). Over 154-204 (FAAVVCCYTGKILIACLYEENEDGEVVRVRDSYVAIANACCAPRFPTLGGR) the chain is Lumenal, vesicle. Tyrosine 186 bears the 3'-nitrotyrosine mark. Residues 205–225 (VVNVAQIIELVMTCILYVVVS) traverse the membrane as a helical segment. Topologically, residues 226-265 (GNLMYNSFPGLPVSQKSWSIIATAVLLPCAFLKNLKAVSK) are cytoplasmic. Residues 266–286 (FSLLCTLAHFVINILVIAYCL) form a helical membrane-spanning segment. The Lumenal, vesicle segment spans residues 287–305 (SRARDWAWEKVKFYIDVKK). The chain crosses the membrane as a helical span at residues 306–326 (FPISIGIIVFSYTSQIFLPSL). At 327 to 341 (EGNMQQPSEFHCMMN) the chain is on the cytoplasmic side. Residues 342–362 (WTHIAACVLKGLFALVAYLTW) traverse the membrane as a helical segment. Residues 363 to 383 (ADETKEVITDNLPGSIRAVVN) are Lumenal, vesicle-facing. Residues 384 to 404 (IFLVAKALLSYPLPFFAAVEV) traverse the membrane as a helical segment. At 405–438 (LEKSLFQEGSRAFFPACYSGDGRLKSWGLTLRCA) the chain is on the cytoplasmic side. Residues 439–459 (LVVFTLLMAIYVPHFALLMGL) traverse the membrane as a helical segment. At 460 to 461 (TG) the chain is on the lumenal, vesicle side. Residues 462–482 (SLTGAGLCFLLPSLFHLRLLW) traverse the membrane as a helical segment. Over 483–489 (RKLLWHQ) the chain is Cytoplasmic. Residues 490–510 (VFFDVAIFVIGGICSVSGFVH) traverse the membrane as a helical segment. The Lumenal, vesicle portion of the chain corresponds to 511-525 (SLEGLIEAYRTNAED).

This sequence belongs to the amino acid/polyamine transporter 2 family. As to expression, retina. Expressed throughout the horizontal cells or more specifically at the terminals.

The protein resides in the cytoplasmic vesicle membrane. The protein localises to the presynapse. It catalyses the reaction 4-aminobutanoate(out) + n H(+)(in) = 4-aminobutanoate(in) + n H(+)(out). The enzyme catalyses glycine(out) + n H(+)(in) = glycine(in) + n H(+)(out). It carries out the reaction beta-alanine(out) + n H(+)(in) = beta-alanine(in) + n H(+)(out). Its function is as follows. Antiporter that exchanges vesicular protons for cytosolic 4-aminobutanoate or to a lesser extend glycine, thus allowing their secretion from nerve terminals. The transport is equally dependent on the chemical and electrical components of the proton gradient. May also transport beta-alanine. Acidification of GABAergic synaptic vesicles is a prerequisite for 4-aminobutanoate uptake. The sequence is that of Vesicular inhibitory amino acid transporter from Homo sapiens (Human).